The following is a 234-amino-acid chain: Large ribosomal subunit protein uL1 (234 aa).

The protein belongs to the universal ribosomal protein uL1 family. Part of the 50S ribosomal subunit.

In terms of biological role, binds directly to 23S rRNA. The L1 stalk is quite mobile in the ribosome, and is involved in E site tRNA release. Functionally, protein L1 is also a translational repressor protein, it controls the translation of the L11 operon by binding to its mRNA. The polypeptide is Large ribosomal subunit protein uL1 (Wolinella succinogenes (strain ATCC 29543 / DSM 1740 / CCUG 13145 / JCM 31913 / LMG 7466 / NCTC 11488 / FDC 602W) (Vibrio succinogenes)).